Reading from the N-terminus, the 244-residue chain is ATP synthase subunit a, chloroplastic (244 aa).

Helical transmembrane passes span 35–55 (QVLI…VIAV), 92–112 (VPFI…GALL), 131–151 (INTT…AGLS), 196–216 (LVVV…VMFL), and 217–237 (GLFT…AYIG).

Belongs to the ATPase A chain family. As to quaternary structure, F-type ATPases have 2 components, CF(1) - the catalytic core - and CF(0) - the membrane proton channel. CF(1) has five subunits: alpha(3), beta(3), gamma(1), delta(1), epsilon(1). CF(0) has four main subunits: a, b, b' and c.

The protein resides in the plastid. It is found in the chloroplast thylakoid membrane. Key component of the proton channel; it plays a direct role in the translocation of protons across the membrane. This is ATP synthase subunit a, chloroplastic from Gossypium hirsutum (Upland cotton).